A 61-amino-acid polypeptide reads, in one-letter code: Photosystem II reaction center protein K (61 aa).

Residues 1 to 24 (MLNILNLICICLNFALYSSSFFFT) constitute a propeptide that is removed on maturation. Residues 40–60 (MPVIPLFFFLLAFVWQAAVSF) traverse the membrane as a helical segment.

The protein belongs to the PsbK family. PSII is composed of 1 copy each of membrane proteins PsbA, PsbB, PsbC, PsbD, PsbE, PsbF, PsbH, PsbI, PsbJ, PsbK, PsbL, PsbM, PsbT, PsbX, PsbY, PsbZ, Psb30/Ycf12, at least 3 peripheral proteins of the oxygen-evolving complex and a large number of cofactors. It forms dimeric complexes.

Its subcellular location is the plastid. It is found in the chloroplast thylakoid membrane. In terms of biological role, one of the components of the core complex of photosystem II (PSII). PSII is a light-driven water:plastoquinone oxidoreductase that uses light energy to abstract electrons from H(2)O, generating O(2) and a proton gradient subsequently used for ATP formation. It consists of a core antenna complex that captures photons, and an electron transfer chain that converts photonic excitation into a charge separation. This is Photosystem II reaction center protein K from Populus alba (White poplar).